The primary structure comprises 128 residues: Fatty acid binding protein 1-B.1 (128 aa).

The protein belongs to the calycin superfamily. Fatty-acid binding protein (FABP) family. As to expression, expressed in the yolk syncytial layer (YSL) and subsequently in the intestinal bulb in developing embryos and larvae. In adults, expressed in the intestine.

It is found in the cytoplasm. In terms of biological role, binds free fatty acids and their coenzyme A derivatives, bilirubin, and some other small molecules in the cytoplasm. May be involved in intracellular lipid transport. This Danio rerio (Zebrafish) protein is Fatty acid binding protein 1-B.1 (fabp1b.1).